The primary structure comprises 666 residues: Mitogen-activated protein kinase kinase kinase ANP1 (666 aa).

Residues 69–331 form the Protein kinase domain; sequence WRKGQLIGRG…ASELLKHPFV (263 aa). ATP-binding positions include 75-83 and Lys98; that span reads IGRGAFGTV. Positions 101 to 131 form a coiled coil; that stretch reads LIAANFASKEKTQAHIQELEEEVKLLKNLSH. Residues Lys109 and Lys111 each participate in a glycyl lysine isopeptide (Lys-Gly) (interchain with G-Cter in ubiquitin) cross-link. Residue Asp197 is the Proton acceptor of the active site. Residues 452–464 are compositionally biased toward basic and acidic residues; it reads KFDESPGNGEKES. Disordered regions lie at residues 452-481, 536-592, and 635-666; these read KFDE…DDDE, GFLK…DGVS, and QEIM…SPGK. The span at 538–558 shows a compositional bias: low complexity; that stretch reads LKLPPKSRSPSRGPLGGSPSR. The segment covering 560–569 has biased composition (polar residues); that stretch reads TDATSCSKSP. A coiled-coil region spans residues 620–643; it reads KKWKEELDQELERKRQEIMRQAGL. A compositionally biased stretch (basic and acidic residues) spans 647-660; sequence PRDRGMSRQREKSR.

It belongs to the protein kinase superfamily. STE Ser/Thr protein kinase family. MAP kinase kinase kinase subfamily. Expressed in roots, inflorescence stems, flower buds and flowers. Low amount in rosette and cauline leaves.

It carries out the reaction L-seryl-[protein] + ATP = O-phospho-L-seryl-[protein] + ADP + H(+). The catalysed reaction is L-threonyl-[protein] + ATP = O-phospho-L-threonyl-[protein] + ADP + H(+). Functionally, may be involved in an oxidative stress-mediated signaling cascade that phosphorylates downstream MAP kinases MPK3 and MPK6. May suppress auxin signaling that promotes cell cycle. Functionally redundant to ANP2 and ANP3 in the positive regulation of cytokinesis. In Arabidopsis thaliana (Mouse-ear cress), this protein is Mitogen-activated protein kinase kinase kinase ANP1 (ANP1).